The primary structure comprises 509 residues: MVLWILWRPFGFSRRLLKLERHSITESKSLIPLAWTSLTQTLSESPGIFLLGQRKRFSTMPEIETHERDSELFSPPSDVRGMTKLDRTAFKKTVNIPVLKVRKEIVSRLMRSLRRAALQRPGIKRVIEDPEDKESRLILLDPYKIFTHDSFEKAELSVLEQLNVSPQISKYNLELTYENFKSEEILRAVLPEGQDVTSGFSRVGHIAHLNLRDHQLPFKQLIGQVMIDKNPGITSAVNKINNIDNMYRNFHMEVLSGEQNMMTKVRENKYTYEFDFSKVYWNPRLSTEHSRITELLKAGDVLFDVFAGVGPFAIPVAKKNCTVFANDLNPESHKWLLHNCKLNKVDQKVKIFNLDGKDFLQGPVKEELIQLLSLSKERKPSVHIVMNLPAKAIEFLSAFKWLLDGQPCSNEFLPIVHCYSFSKDANPAKDVRQRAGAVLGISLEACSSVHLVRNVAPNKEMLCITFQIPAAVLYKNQTKNPENHEDPPLKRQRTAEAFSDEKTQIASNT.

The N-terminal 57 residues, 1-57 (MVLWILWRPFGFSRRLLKLERHSITESKSLIPLAWTSLTQTLSESPGIFLLGQRKRF), are a transit peptide targeting the mitochondrion. Residues His-289, 327–328 (DL), 355–356 (DG), and Asn-387 each bind S-adenosyl-L-methionine. The disordered stretch occupies residues 478-509 (TKNPENHEDPPLKRQRTAEAFSDEKTQIASNT).

The protein belongs to the class I-like SAM-binding methyltransferase superfamily. TRM5/TYW2 family. In terms of assembly, monomer.

It is found in the mitochondrion matrix. The protein resides in the nucleus. Its subcellular location is the cytoplasm. The catalysed reaction is guanosine(37) in tRNA + S-adenosyl-L-methionine = N(1)-methylguanosine(37) in tRNA + S-adenosyl-L-homocysteine + H(+). Functionally, involved in mitochondrial tRNA methylation. Specifically methylates the N1 position of guanosine-37 in various tRNAs. Methylation is not dependent on the nature of the nucleoside 5' of the target nucleoside. This is the first step in the biosynthesis of wybutosine (yW), a modified base adjacent to the anticodon of tRNAs and required for accurate decoding. This Macaca mulatta (Rhesus macaque) protein is tRNA (guanine(37)-N(1))-methyltransferase.